A 213-amino-acid chain; its full sequence is Probable chemoreceptor glutamine deamidase CheD (213 aa).

The span at 1-12 (MNRHRPHSHRSK) shows a compositional bias: basic residues. A disordered region spans residues 1–25 (MNRHRPHSHRSKPASTQDQPDSVRR).

Belongs to the CheD family.

The enzyme catalyses L-glutaminyl-[protein] + H2O = L-glutamyl-[protein] + NH4(+). In terms of biological role, probably deamidates glutamine residues to glutamate on methyl-accepting chemotaxis receptors (MCPs), playing an important role in chemotaxis. In Rhodopseudomonas palustris (strain BisA53), this protein is Probable chemoreceptor glutamine deamidase CheD.